We begin with the raw amino-acid sequence, 328 residues long: Phosphate acyltransferase (328 aa).

This sequence belongs to the PlsX family. As to quaternary structure, homodimer. Probably interacts with PlsY.

It is found in the cytoplasm. It catalyses the reaction a fatty acyl-[ACP] + phosphate = an acyl phosphate + holo-[ACP]. Its pathway is lipid metabolism; phospholipid metabolism. In terms of biological role, catalyzes the reversible formation of acyl-phosphate (acyl-PO(4)) from acyl-[acyl-carrier-protein] (acyl-ACP). This enzyme utilizes acyl-ACP as fatty acyl donor, but not acyl-CoA. The sequence is that of Phosphate acyltransferase from Campylobacter jejuni subsp. jejuni serotype O:23/36 (strain 81-176).